The primary structure comprises 518 residues: Bifunctional purine biosynthesis protein PurH (518 aa).

The MGS-like domain maps to 1–144 (MSKRALISVS…KNHASVTVVC (144 aa)).

Belongs to the PurH family.

It catalyses the reaction (6R)-10-formyltetrahydrofolate + 5-amino-1-(5-phospho-beta-D-ribosyl)imidazole-4-carboxamide = 5-formamido-1-(5-phospho-D-ribosyl)imidazole-4-carboxamide + (6S)-5,6,7,8-tetrahydrofolate. The catalysed reaction is IMP + H2O = 5-formamido-1-(5-phospho-D-ribosyl)imidazole-4-carboxamide. The protein operates within purine metabolism; IMP biosynthesis via de novo pathway; 5-formamido-1-(5-phospho-D-ribosyl)imidazole-4-carboxamide from 5-amino-1-(5-phospho-D-ribosyl)imidazole-4-carboxamide (10-formyl THF route): step 1/1. It functions in the pathway purine metabolism; IMP biosynthesis via de novo pathway; IMP from 5-formamido-1-(5-phospho-D-ribosyl)imidazole-4-carboxamide: step 1/1. This Lactococcus lactis subsp. lactis (strain IL1403) (Streptococcus lactis) protein is Bifunctional purine biosynthesis protein PurH.